A 109-amino-acid chain; its full sequence is Putative double-stranded DNA mimic protein YciU (109 aa).

This sequence belongs to the putative dsDNA mimic protein family.

May act as a double-stranded DNA (dsDNA) mimic. Probably regulates the activity of a dsDNA-binding protein. This Salmonella choleraesuis (strain SC-B67) protein is Putative double-stranded DNA mimic protein YciU.